A 391-amino-acid chain; its full sequence is Isocitrate dehydrogenase [NADP] (391 aa).

Ser102, Asn104, Arg108, Arg118, and Arg142 together coordinate D-threo-isocitrate. Mg(2+) is bound at residue Asp283.

It belongs to the isocitrate and isopropylmalate dehydrogenases family. In terms of assembly, homodimer. It depends on Mg(2+) as a cofactor. Requires Mn(2+) as cofactor.

It carries out the reaction D-threo-isocitrate + NADP(+) = 2-oxoglutarate + CO2 + NADPH. Catalyzes the oxidative decarboxylation of isocitrate to 2-oxoglutarate and carbon dioxide with the concomitant reduction of NADP(+). This Streptococcus salivarius protein is Isocitrate dehydrogenase [NADP] (icd).